The primary structure comprises 394 residues: Exodeoxyribonuclease 7 large subunit (394 aa).

The protein belongs to the XseA family. As to quaternary structure, heterooligomer composed of large and small subunits.

The protein localises to the cytoplasm. It catalyses the reaction Exonucleolytic cleavage in either 5'- to 3'- or 3'- to 5'-direction to yield nucleoside 5'-phosphates.. Its function is as follows. Bidirectionally degrades single-stranded DNA into large acid-insoluble oligonucleotides, which are then degraded further into small acid-soluble oligonucleotides. This Thermotoga maritima (strain ATCC 43589 / DSM 3109 / JCM 10099 / NBRC 100826 / MSB8) protein is Exodeoxyribonuclease 7 large subunit.